The following is an 87-amino-acid chain: U14-lycotoxin-Ls1a (87 aa).

An N-terminal signal peptide occupies residues 1–20 (MNSKVFAALLLLALSTCVLS). The 46-residue stretch at 21-66 (EKYCPTPRNTSCKKMNIRNNCCRDSDCTSNAFCCAEPCGNFCHKAS) folds into the WAP domain. 5 disulfides stabilise this stretch: Cys-24–Cys-54, Cys-32–Cys-58, Cys-41–Cys-53, Cys-42–Cys-80, and Cys-47–Cys-62.

This sequence belongs to the venom protein 11 family. 01 (wap-1) subfamily. Contains 5 disulfide bonds. Expressed by the venom gland.

It is found in the secreted. In terms of biological role, has antibacterial activity. In Lycosa singoriensis (Wolf spider), this protein is U14-lycotoxin-Ls1a.